Here is a 132-residue protein sequence, read N- to C-terminus: Small ribosomal subunit protein uS8 (132 aa).

Belongs to the universal ribosomal protein uS8 family. As to quaternary structure, part of the 30S ribosomal subunit. Contacts proteins S5 and S12.

Its function is as follows. One of the primary rRNA binding proteins, it binds directly to 16S rRNA central domain where it helps coordinate assembly of the platform of the 30S subunit. This Geobacillus kaustophilus (strain HTA426) protein is Small ribosomal subunit protein uS8.